The chain runs to 227 residues: PKHD-type hydroxylase ACIAD0531 (227 aa).

One can recognise a Fe2OG dioxygenase domain in the interval 78–178 (HIIPPLFNRY…RFASFFWVQS (101 aa)). Fe cation is bound by residues histidine 96, aspartate 98, and histidine 159. Arginine 169 lines the 2-oxoglutarate pocket.

Requires Fe(2+) as cofactor. It depends on L-ascorbate as a cofactor.

The sequence is that of PKHD-type hydroxylase ACIAD0531 from Acinetobacter baylyi (strain ATCC 33305 / BD413 / ADP1).